Here is a 267-residue protein sequence, read N- to C-terminus: Undecaprenyl-diphosphatase (267 aa).

8 consecutive transmembrane segments (helical) span residues 1–21 (MTYF…FLPI), 39–59 (QGLA…VIYF), 83–103 (SNLA…GLLF), 111–131 (LRSA…LWWV), 149–169 (ALFL…RSGI), 189–209 (FLMS…KLAM), 218–238 (LLST…HFFL), and 246–266 (MMPF…WLAL).

The protein belongs to the UppP family.

It localises to the cell inner membrane. It catalyses the reaction di-trans,octa-cis-undecaprenyl diphosphate + H2O = di-trans,octa-cis-undecaprenyl phosphate + phosphate + H(+). In terms of biological role, catalyzes the dephosphorylation of undecaprenyl diphosphate (UPP). Confers resistance to bacitracin. The polypeptide is Undecaprenyl-diphosphatase (Aliivibrio fischeri (strain MJ11) (Vibrio fischeri)).